We begin with the raw amino-acid sequence, 333 residues long: Starch-binding domain-containing protein 1 (333 aa).

Residues 1–6 lie on the Extracellular side of the membrane; sequence MGAVWS. A helical membrane pass occupies residues 7–23; sequence ALLVGGGLAGALILWLL. The Cytoplasmic portion of the chain corresponds to 24-333; the sequence is RGDSGAPGKD…KVVHGWWGIH (310 aa). Disordered stretches follow at residues 31–73 and 106–139; these read GKDG…ELVS and NAREYVPVGKVPDTHSRANSETSRNQSPESRVGE. The segment covering 50–61 has biased composition (gly residues); sequence PGGGPGGGGSGG. S67 is subject to Phosphoserine. A compositionally biased stretch (polar residues) spans 124–134; it reads NSETSRNQSPE. Residues S135 and S162 each carry the phosphoserine modification. The short motif at 181 to 187 is the LIR element; it reads HEDWEVV. S191, S192, S201, S205, S208, S216, and S219 each carry phosphoserine. The region spanning 233-332 is the CBM20 domain; that stretch reads SVKPRQVSIQ…DKVVHGWWGI (100 aa).

In terms of assembly, interacts with the ATG8 family proteins GABARAP and GABARAPL1. Interacts with several glycogen-associated proteins, such as GYS2 (liver glycogen synthase), GDE (glycogen debranching enzyme), GBE1 (glycogen branching enzyme 1) and EPM2A (Laforin). Ubiquitinated, which leads to proteasomal degradation.

It is found in the preautophagosomal structure membrane. It localises to the endoplasmic reticulum membrane. The protein resides in the cell membrane. The protein localises to the sarcolemma. Its subcellular location is the T-tubule. Functionally, acts as a cargo receptor for glycogen. Delivers its cargo to an autophagic pathway called glycophagy, resulting in the transport of glycogen to lysosomes. The protein is Starch-binding domain-containing protein 1 of Rattus norvegicus (Rat).